A 447-amino-acid polypeptide reads, in one-letter code: Protein disulfide-isomerase like 2-2 (447 aa).

Residues 1–26 form the signal peptide; it reads MERKMYKSTVFPICCLLFALFDRGNA. Thioredoxin domains lie at 27-139 and 161-275; these read LYGS…QIKA and KKKS…QLES. Active-site nucleophile residues include Cys-62 and Cys-65. A disulfide bridge connects residues Cys-62 and Cys-65. A disordered region spans residues 146 to 170; it reads DGKTSGTKNGGGSSEKKKSEPSASV. Asn-173 is a glycosylation site (N-linked (GlcNAc...) asparagine). Catalysis depends on nucleophile residues Cys-197 and Cys-200. Cys-197 and Cys-200 form a disulfide bridge. A Prevents secretion from ER motif is present at residues 444-447; it reads KDDL.

Belongs to the protein disulfide isomerase family. Widely expressed.

The protein resides in the endoplasmic reticulum lumen. It catalyses the reaction Catalyzes the rearrangement of -S-S- bonds in proteins.. In terms of biological role, acts as a protein-folding catalyst that interacts with nascent polypeptides to catalyze the formation, isomerization, and reduction or oxidation of disulfide bonds. In Arabidopsis thaliana (Mouse-ear cress), this protein is Protein disulfide-isomerase like 2-2 (PDIL2-2).